Reading from the N-terminus, the 918-residue chain is MATFARMKLCLSGSSQAIPSKGISLVAARFQSTASRASYVTPPYEKLMGKLQQVRKFLPGQKLTLAEKVLYSHLVNPEESFSGVSPSDIRGSLYLKLNPDRVAMQDASAQMALLQFMTCGLEKTMIPASIHCDHLIVGHRGANSDIPDSIANNKEIFDFLQSAAKKYGIQFWGPGSGIIHQIVLENYAAPGGMMLGTDSHTPNAGGLGMIAIGVGGADAVDAMTNTPWELKAPKIIGVNLTGAMSGWTTPKDLILHLAGKLTVRGGTGHIIEYFGPGVASLSCTGMATVCNMGAEVGATTSIFPYTDSMRRYLIATHRAEVADAASEVHSEYNYLAADTGAKYDQIIDINLSELTPSLNGPFTPDLSTPVSKFGEAIEKNKWPKKLSAGLIGSCTNSSYQDMTCVVDVVEQAISAGLKPKVPFLVTPGSEQIRATIERDGITERLEEAGATVLANACGPCIGMWKRTDDIASGEPNAILTSFNRNFRSRNDGNPSTMNFLTSPVIVAAKIFSSDLAFDPTHDTLQTPDGKAFKFRPPQGVELPSAGFIAGDSSYIPEPNPQPVPETEVTIDPKSDRLEALEPFEPYQGGEMENLKVAVKVKGKCTTDHISAAGKWLKYKGHLSNICNNTLIGAMNAATGEVNRAYDNGKGMTIPELMWKWKKDGQPWLVVAEHNYGEGSAREHAALQPRAMNGRIILTKSFARIHETNLKKQGVLPLTFVNEADYEKIDAEDKVSTRGIEQLLEGVLDQPITLVVTKKDGSVVEIPCKHTMSKDQIEFFKAGSALNLIREKAHSGVVNQKVIDSIKQQPDHYADAYIFNRHFVIAKGDQLGLPFHLKGVQVGDTIRLDKIASFGSRDFTLFGNPYVDPSLFTIEAVVLSFPKSALSVRVKHKRRHRHDRVMKHKQTYTILRVTELKLN.

A mitochondrion-targeting transit peptide spans 1–30; that stretch reads MATFARMKLCLSGSSQAIPSKGISLVAARF. The interval 31–811 is homocitrate dehydratase, mitochondrial; sequence QSTASRASYV…IDSIKQQPDH (781 aa). Substrate is bound by residues glutamine 105 and 198-200; that span reads DSH. [4Fe-4S] cluster contacts are provided by cysteine 394, cysteine 457, and cysteine 460. Residues arginine 484, arginine 489, lysine 619, and 680 to 681 each bind substrate; that span reads AR. The large ribosomal subunit protein bL21m stretch occupies residues 812 to 918; it reads YADAYIFNRH…ILRVTELKLN (107 aa).

This sequence in the N-terminal section; belongs to the aconitase/IPM isomerase family. It in the C-terminal section; belongs to the bacterial ribosomal protein bL21 family. As to quaternary structure, component of the mitochondrial large ribosomal subunit (mt-LSU). Mature yeast 74S mitochondrial ribosomes consist of a small (37S) and a large (54S) subunit. The 37S small subunit contains a 15S ribosomal RNA (15S mt-rRNA) and at least 32 different proteins. The 54S large subunit contains a 21S rRNA (21S mt-rRNA) and at least 45 different proteins. [4Fe-4S] cluster is required as a cofactor.

Its subcellular location is the mitochondrion. It is found in the nucleus. It catalyses the reaction (2R)-homocitrate = cis-homoaconitate + H2O. Its pathway is amino-acid biosynthesis; L-lysine biosynthesis via AAA pathway; L-alpha-aminoadipate from 2-oxoglutarate: step 2/5. Its function is as follows. Catalyzes the reversible dehydration of (R)-homocitrate to cis-homoaconitate, a step in the alpha-aminoadipate pathway for lysine biosynthesis. In terms of biological role, component of the mitochondrial ribosome (mitoribosome), a dedicated translation machinery responsible for the synthesis of mitochondrial genome-encoded proteins, including at least some of the essential transmembrane subunits of the mitochondrial respiratory chain. The mitoribosomes are attached to the mitochondrial inner membrane and translation products are cotranslationally integrated into the membrane. The chain is Aconitase-ribosomal protein bL21m fusion protein (aco2) from Schizosaccharomyces pombe (strain 972 / ATCC 24843) (Fission yeast).